The sequence spans 482 residues: tRNA sulfurtransferase (482 aa).

The THUMP domain occupies Leu-61 to Arg-165. Residues Leu-183–Ile-184, Lys-265, Gly-287, and Gln-296 contribute to the ATP site. An intrachain disulfide couples Cys-344 to Cys-456. The 79-residue stretch at Phe-404–Pro-482 folds into the Rhodanese domain. The active-site Cysteine persulfide intermediate is the Cys-456.

The protein belongs to the ThiI family.

The protein localises to the cytoplasm. It carries out the reaction [ThiI sulfur-carrier protein]-S-sulfanyl-L-cysteine + a uridine in tRNA + 2 reduced [2Fe-2S]-[ferredoxin] + ATP + H(+) = [ThiI sulfur-carrier protein]-L-cysteine + a 4-thiouridine in tRNA + 2 oxidized [2Fe-2S]-[ferredoxin] + AMP + diphosphate. The catalysed reaction is [ThiS sulfur-carrier protein]-C-terminal Gly-Gly-AMP + S-sulfanyl-L-cysteinyl-[cysteine desulfurase] + AH2 = [ThiS sulfur-carrier protein]-C-terminal-Gly-aminoethanethioate + L-cysteinyl-[cysteine desulfurase] + A + AMP + 2 H(+). It functions in the pathway cofactor biosynthesis; thiamine diphosphate biosynthesis. Functionally, catalyzes the ATP-dependent transfer of a sulfur to tRNA to produce 4-thiouridine in position 8 of tRNAs, which functions as a near-UV photosensor. Also catalyzes the transfer of sulfur to the sulfur carrier protein ThiS, forming ThiS-thiocarboxylate. This is a step in the synthesis of thiazole, in the thiamine biosynthesis pathway. The sulfur is donated as persulfide by IscS. In Escherichia coli O8 (strain IAI1), this protein is tRNA sulfurtransferase.